A 155-amino-acid polypeptide reads, in one-letter code: Large ribosomal subunit protein uL22c (155 aa).

The protein belongs to the universal ribosomal protein uL22 family. Part of the 50S ribosomal subunit.

It localises to the plastid. It is found in the chloroplast. This protein binds specifically to 23S rRNA. Functionally, the globular domain of the protein is located near the polypeptide exit tunnel on the outside of the subunit, while an extended beta-hairpin is found that lines the wall of the exit tunnel in the center of the 70S ribosome. This is Large ribosomal subunit protein uL22c (rpl22) from Solanum bulbocastanum (Wild potato).